Consider the following 398-residue polypeptide: S-adenosylmethionine decarboxylase proenzyme (398 aa).

Residues Glu18 and Glu21 contribute to the active site. Ser78 (schiff-base intermediate with substrate; via pyruvic acid) is an active-site residue. The residue at position 78 (Ser78) is a Pyruvic acid (Ser); by autocatalysis. Cys92 (proton donor; for catalytic activity) is an active-site residue. Residues Ser243 and His256 each act as proton acceptor; for processing activity in the active site.

This sequence belongs to the eukaryotic AdoMetDC family. Pyruvate serves as cofactor. In terms of processing, is synthesized initially as an inactive proenzyme. Formation of the active enzyme involves a self-maturation process in which the active site pyruvoyl group is generated from an internal serine residue via an autocatalytic post-translational modification. Two non-identical subunits are generated from the proenzyme in this reaction, and the pyruvate is formed at the N-terminus of the alpha chain, which is derived from the carboxyl end of the proenzyme. The post-translation cleavage follows an unusual pathway, termed non-hydrolytic serinolysis, in which the side chain hydroxyl group of the serine supplies its oxygen atom to form the C-terminus of the beta chain, while the remainder of the serine residue undergoes an oxidative deamination to produce ammonia and the pyruvoyl group blocking the N-terminus of the alpha chain.

It carries out the reaction S-adenosyl-L-methionine + H(+) = S-adenosyl 3-(methylsulfanyl)propylamine + CO2. Its pathway is amine and polyamine biosynthesis; S-adenosylmethioninamine biosynthesis; S-adenosylmethioninamine from S-adenosyl-L-methionine: step 1/1. The chain is S-adenosylmethionine decarboxylase proenzyme (SAMDC) from Oryza sativa subsp. japonica (Rice).